The following is a 181-amino-acid chain: MKIDENLPNYLTIARIAAIPVIILTFYINSPLARMLGALLFVLASITDFFDGYIARKYNLVTSFGKMLDPIADKLLVGCVIIMLLKKSDVDEIPCLLILAREFLVSGLREFLALVKVSVPVSTLAKTKTFLQMFALSILVLGSKGSNIIYLDLVGEIILWIAAFLTIITGYSYFKACKKYF.

Transmembrane regions (helical) follow at residues 8–28, 35–55, 64–84, and 148–168; these read PNYL…TFYI, MLGA…GYIA, FGKM…IIML, and IIYL…LTII.

It belongs to the CDP-alcohol phosphatidyltransferase class-I family.

The protein resides in the cell membrane. It catalyses the reaction a CDP-1,2-diacyl-sn-glycerol + sn-glycerol 3-phosphate = a 1,2-diacyl-sn-glycero-3-phospho-(1'-sn-glycero-3'-phosphate) + CMP + H(+). It participates in phospholipid metabolism; phosphatidylglycerol biosynthesis; phosphatidylglycerol from CDP-diacylglycerol: step 1/2. Functionally, this protein catalyzes the committed step to the synthesis of the acidic phospholipids. This chain is CDP-diacylglycerol--glycerol-3-phosphate 3-phosphatidyltransferase (pgsA), found in Rickettsia bellii (strain RML369-C).